Reading from the N-terminus, the 413-residue chain is Glucose-1-phosphatase (413 aa).

The first 22 residues, 1-22 (MKKSLLAVAVAGAVLLSSAVQA), serve as a signal peptide directing secretion. Arg39 is a binding site for substrate. The Nucleophile role is filled by His40. 3 residues coordinate substrate: Arg43, Arg116, and Glu218. Asp312 (proton donor) is an active-site residue.

It belongs to the histidine acid phosphatase family. Homodimer.

Its subcellular location is the periplasm. The enzyme catalyses alpha-D-glucose 1-phosphate + H2O = D-glucose + phosphate. This chain is Glucose-1-phosphatase (agp), found in Salmonella typhimurium (strain LT2 / SGSC1412 / ATCC 700720).